We begin with the raw amino-acid sequence, 184 residues long: UPF0398 protein BC_1561 (184 aa).

The protein belongs to the UPF0398 family.

The chain is UPF0398 protein BC_1561 from Bacillus cereus (strain ATCC 14579 / DSM 31 / CCUG 7414 / JCM 2152 / NBRC 15305 / NCIMB 9373 / NCTC 2599 / NRRL B-3711).